A 448-amino-acid polypeptide reads, in one-letter code: tRNA modification GTPase MnmE (448 aa).

Arg25, Glu83, and Lys122 together coordinate (6S)-5-formyl-5,6,7,8-tetrahydrofolate. The 155-residue stretch at 218-372 (GFKVAIIGKP…LTQKLQKLLD (155 aa)) folds into the TrmE-type G domain. A K(+)-binding site is contributed by Asn228. GTP-binding positions include 228–233 (NTGKSS), 247–253 (SDIAGTT), and 272–275 (DTAG). Ser232 contacts Mg(2+). Ser247, Ile249, and Thr252 together coordinate K(+). Thr253 is a binding site for Mg(2+). Lys448 serves as a coordination point for (6S)-5-formyl-5,6,7,8-tetrahydrofolate.

Belongs to the TRAFAC class TrmE-Era-EngA-EngB-Septin-like GTPase superfamily. TrmE GTPase family. As to quaternary structure, homodimer. Heterotetramer of two MnmE and two MnmG subunits. K(+) is required as a cofactor.

Its subcellular location is the cytoplasm. Its function is as follows. Exhibits a very high intrinsic GTPase hydrolysis rate. Involved in the addition of a carboxymethylaminomethyl (cmnm) group at the wobble position (U34) of certain tRNAs, forming tRNA-cmnm(5)s(2)U34. This is tRNA modification GTPase MnmE from Nitratiruptor sp. (strain SB155-2).